The primary structure comprises 271 residues: Probable esterase D14L (271 aa).

The active-site Nucleophile is S96. Active-site residues include D218 and H247.

The protein belongs to the AB hydrolase superfamily. Component of an intracellular receptor complex involved in the detection of the smoke compound karrikin. In terms of tissue distribution, expressed constitutively in all organs (e.g. roots, stems, leaves, panicles and embryos).

Its subcellular location is the nucleus. It is found in the cytoplasm. Its function is as follows. May be involved in strigolactone signaling pathway. Essential for plant responses to karrikins, a class of butenolide compounds, structurally similar to strigolactones, released from burning vegetation that stimulate seed germination and enhance seedling photomorphogenesis. Mediates a specific perception of karrikin. Required for the establishment of symbiosis with the arbuscular mycorrhizal fungi (AMF) Rhizophagus irregularis and Gigaspora rosea. Karrikin binding induces a conformational change. In Oryza sativa subsp. japonica (Rice), this protein is Probable esterase D14L (D14L).